We begin with the raw amino-acid sequence, 267 residues long: Glucosamine-6-phosphate deaminase (267 aa).

Asp72 functions as the Proton acceptor; for enolization step in the catalytic mechanism. Asp141 acts as the For ring-opening step in catalysis. The active-site Proton acceptor; for ring-opening step is His143. Glu148 (for ring-opening step) is an active-site residue.

This sequence belongs to the glucosamine/galactosamine-6-phosphate isomerase family. NagB subfamily. Homohexamer.

It carries out the reaction alpha-D-glucosamine 6-phosphate + H2O = beta-D-fructose 6-phosphate + NH4(+). It participates in amino-sugar metabolism; N-acetylneuraminate degradation; D-fructose 6-phosphate from N-acetylneuraminate: step 5/5. Its activity is regulated as follows. Allosterically activated by N-acetylglucosamine 6-phosphate (GlcNAc6P). Its function is as follows. Catalyzes the reversible isomerization-deamination of glucosamine 6-phosphate (GlcN6P) to form fructose 6-phosphate (Fru6P) and ammonium ion. The chain is Glucosamine-6-phosphate deaminase from Actinobacillus pleuropneumoniae serotype 5b (strain L20).